The following is a 240-amino-acid chain: Methylthioribulose-1-phosphate dehydratase (240 aa).

The segment covering 1-10 has biased composition (basic and acidic residues); the sequence is MAQEIEKTNN. Positions 1-20 are disordered; it reads MAQEIEKTNNDHLVQSSDPE. Cys100 lines the substrate pocket. Residues His117 and His119 each contribute to the Zn(2+) site. The active-site Proton donor/acceptor is Glu146. His202 contacts Zn(2+).

This sequence belongs to the aldolase class II family. MtnB subfamily. The cofactor is Zn(2+).

It localises to the cytoplasm. It carries out the reaction 5-(methylsulfanyl)-D-ribulose 1-phosphate = 5-methylsulfanyl-2,3-dioxopentyl phosphate + H2O. It functions in the pathway amino-acid biosynthesis; L-methionine biosynthesis via salvage pathway; L-methionine from S-methyl-5-thio-alpha-D-ribose 1-phosphate: step 2/6. Catalyzes the dehydration of methylthioribulose-1-phosphate (MTRu-1-P) into 2,3-diketo-5-methylthiopentyl-1-phosphate (DK-MTP-1-P). The protein is Methylthioribulose-1-phosphate dehydratase of Aspergillus fumigatus (strain CBS 144.89 / FGSC A1163 / CEA10) (Neosartorya fumigata).